A 161-amino-acid chain; its full sequence is Protein-lysine N-methyltransferase (161 aa).

The DxGxGxG SAM-binding motif signature appears at 34 to 40; the sequence is DLGCGDG.

This sequence belongs to the class I-like SAM-binding methyltransferase superfamily. Monomer.

The enzyme catalyses L-lysyl-[protein] + S-adenosyl-L-methionine = N(6)-methyl-L-lysyl-[protein] + S-adenosyl-L-homocysteine + H(+). Its function is as follows. Catalyzes the methylation of lysine residues in target proteins, using S-adenosyl-L-methionine (SAM) as the methyl donor. Exhibits broad substrate specificity, being able to methylate the crenarchaeal chromatin protein Cren7 primarily at 'Lys-11', 'Lys-16' and 'Lys-31', as well as a number of recombinant Sulfolobus proteins in vitro. Methylates lysine residues in a rather sequence-independent manner. The protein is Protein-lysine N-methyltransferase of Saccharolobus islandicus (strain REY15A) (Sulfolobus islandicus).